Consider the following 185-residue polypeptide: MLEQAPAEVKQVIESGGVVAYPTEAVYGLGCDPDNDAAITKLLAIKKRPWEKGLILVASDYQQLLPYIDDSQLTEEQRERVFSKWPGPFTFIMPIKPGISNLLCGSFNSLAVRVSDHPTIQAICQQLGKPLVSTSANHSGEEPAMSHEEILAKFEGEIDALVAGSLGEQRKPSTIIDAISGKILR.

In terms of domain architecture, YrdC-like spans 3–185; it reads EQAPAEVKQV…IDAISGKILR (183 aa).

The protein belongs to the SUA5 family. TsaC subfamily.

The protein localises to the cytoplasm. It carries out the reaction L-threonine + hydrogencarbonate + ATP = L-threonylcarbamoyladenylate + diphosphate + H2O. In terms of biological role, required for the formation of a threonylcarbamoyl group on adenosine at position 37 (t(6)A37) in tRNAs that read codons beginning with adenine. Catalyzes the conversion of L-threonine, HCO(3)(-)/CO(2) and ATP to give threonylcarbamoyl-AMP (TC-AMP) as the acyladenylate intermediate, with the release of diphosphate. The protein is Threonylcarbamoyl-AMP synthase of Shewanella woodyi (strain ATCC 51908 / MS32).